The following is a 428-amino-acid chain: C4-dicarboxylate transport protein (428 aa).

8 helical membrane passes run 8–28 (SLYF…HFYP), 44–64 (LIKM…IAGM), 76–96 (VALL…LIIV), 142–162 (IGAF…LFGF), 184–204 (VIFG…FGAM), 222–242 (LIIC…GSIA), 326–346 (IFHQ…AAGV), and 352–372 (IVLA…LALI).

It belongs to the dicarboxylate/amino acid:cation symporter (DAACS) (TC 2.A.23) family.

It is found in the cell inner membrane. Functionally, responsible for the transport of dicarboxylates such as succinate, fumarate, and malate from the periplasm across the membrane. This is C4-dicarboxylate transport protein from Enterobacter sp. (strain 638).